The primary structure comprises 158 residues: Phosphopantetheine adenylyltransferase (158 aa).

S10 provides a ligand contact to substrate. ATP is bound by residues 10–11 and H18; that span reads SF. Positions 42, 74, and 88 each coordinate substrate. ATP-binding positions include 89–91, E99, and 124–130; these read GLR and YANISSS.

It belongs to the bacterial CoaD family. Homohexamer. Mg(2+) is required as a cofactor.

The protein localises to the cytoplasm. The enzyme catalyses (R)-4'-phosphopantetheine + ATP + H(+) = 3'-dephospho-CoA + diphosphate. The protein operates within cofactor biosynthesis; coenzyme A biosynthesis; CoA from (R)-pantothenate: step 4/5. Functionally, reversibly transfers an adenylyl group from ATP to 4'-phosphopantetheine, yielding dephospho-CoA (dPCoA) and pyrophosphate. This Vesicomyosocius okutanii subsp. Calyptogena okutanii (strain HA) protein is Phosphopantetheine adenylyltransferase.